Consider the following 102-residue polypeptide: Malonate decarboxylase acyl carrier protein (102 aa).

Ser27 is subject to O-(phosphoribosyl dephospho-coenzyme A)serine.

It belongs to the MdcC family. In terms of processing, covalently binds the prosthetic group of malonate decarboxylase.

Its subcellular location is the cytoplasm. Functionally, subunit of malonate decarboxylase, it is an acyl carrier protein to which acetyl and malonyl thioester residues are bound via a 2'-(5''-phosphoribosyl)-3'-dephospho-CoA prosthetic group and turn over during the catalytic mechanism. The polypeptide is Malonate decarboxylase acyl carrier protein (Acinetobacter calcoaceticus).